The chain runs to 519 residues: GTPase Der (519 aa).

2 stretches are compositionally biased toward acidic residues: residues 1–12 (MDVEGAFADEEE) and 30–54 (GYEDSDDDFDAEDFDETEFSNPDFG). Residues 1-54 (MDVEGAFADEEELAPHGGWASADFDPAEFGYEDSDDDFDAEDFDETEFSNPDFG) form a disordered region. EngA-type G domains lie at 81–244 (CTVA…PEEP) and 254–427 (RRVA…DNWD). GTP is bound by residues 87-94 (GRPNVGKS), 134-138 (DTGGW), 196-199 (NKFD), 260-267 (GKPNVGKS), 307-311 (DTAGL), and 372-375 (NKWD). The KH-like domain occupies 428–510 (RRISTGQLNT…PVRIAVRVRE (83 aa)).

The protein belongs to the TRAFAC class TrmE-Era-EngA-EngB-Septin-like GTPase superfamily. EngA (Der) GTPase family. In terms of assembly, associates with the 50S ribosomal subunit.

GTPase that plays an essential role in the late steps of ribosome biogenesis. This is GTPase Der from Corynebacterium glutamicum (strain ATCC 13032 / DSM 20300 / JCM 1318 / BCRC 11384 / CCUG 27702 / LMG 3730 / NBRC 12168 / NCIMB 10025 / NRRL B-2784 / 534).